The following is a 344-amino-acid chain: Sesquiterpene synthase 9 (344 aa).

Mg(2+)-binding residues include aspartate 88, asparagine 224, serine 228, and glutamate 232. The DDXXD motif signature appears at 88–92; that stretch reads DEYSD. An NSE/DTE motif motif is present at residues 224 to 232; sequence NDMLSWNVE. Residues arginine 313 and tyrosine 314 each contribute to the (2E,6E)-farnesyl diphosphate site.

Belongs to the terpene synthase family. It depends on Mg(2+) as a cofactor.

Terpene cyclase that catalyzes the cyclization of farnesyl diphosphate (FPP) to a single major sesquiterpene scaffold whose chemical structure is still unknown. This Postia placenta (strain ATCC 44394 / Madison 698-R) (Brown rot fungus) protein is Sesquiterpene synthase 9.